We begin with the raw amino-acid sequence, 90 residues long: Small ribosomal subunit protein uS15 (90 aa).

This sequence belongs to the universal ribosomal protein uS15 family. Part of the 30S ribosomal subunit. Forms a bridge to the 50S subunit in the 70S ribosome, contacting the 23S rRNA.

Functionally, one of the primary rRNA binding proteins, it binds directly to 16S rRNA where it helps nucleate assembly of the platform of the 30S subunit by binding and bridging several RNA helices of the 16S rRNA. Its function is as follows. Forms an intersubunit bridge (bridge B4) with the 23S rRNA of the 50S subunit in the ribosome. The protein is Small ribosomal subunit protein uS15 of Campylobacter jejuni subsp. jejuni serotype O:6 (strain 81116 / NCTC 11828).